Reading from the N-terminus, the 329-residue chain is DNA-directed RNA polymerase subunit alpha (329 aa).

The tract at residues 1–232 (MQEMLEQLLT…YQLIAFVDLK (232 aa)) is alpha N-terminal domain (alpha-NTD). Positions 246-329 (FDPIFLQPVD…PSSLVSKESA (84 aa)) are alpha C-terminal domain (alpha-CTD).

This sequence belongs to the RNA polymerase alpha chain family. Homodimer. The RNAP catalytic core consists of 2 alpha, 1 beta, 1 beta' and 1 omega subunit. When a sigma factor is associated with the core the holoenzyme is formed, which can initiate transcription.

The catalysed reaction is RNA(n) + a ribonucleoside 5'-triphosphate = RNA(n+1) + diphosphate. Functionally, DNA-dependent RNA polymerase catalyzes the transcription of DNA into RNA using the four ribonucleoside triphosphates as substrates. The sequence is that of DNA-directed RNA polymerase subunit alpha from Hydrogenovibrio crunogenus (strain DSM 25203 / XCL-2) (Thiomicrospira crunogena).